The sequence spans 422 residues: Serine protease HTRA2, mitochondrial (422 aa).

The N-terminal 17 residues, 1 to 17, are a transit peptide targeting the mitochondrion; the sequence is MALRGSHRLEVIFKRCI. Positions 18–74 are excised as a propeptide; sequence ASPVFHSHAANRRSSQLAIKGTDPSSNGNSGQDQQNGEQKAKGWRRLVRFFVPFSLG. A compositionally biased stretch (polar residues) spans 29 to 55; sequence RRSSQLAIKGTDPSSNGNSGQDQQNGE. Residues 29 to 56 form a disordered region; it reads RRSSQLAIKGTDPSSNGNSGQDQQNGEQ. A helical membrane pass occupies residues 64–82; that stretch reads LVRFFVPFSLGAAVSAAVI. 2 consecutive short sequence motifs (IAP-binding) follow at residues 75-78 and 94-97; these read AAVS and SKMT. The segment at 139-302 is serine protease; the sequence is SNGSGFIIEQ…IPIDYVKVFL (164 aa). Residues His-157, Asp-189, and Ser-266 each act as charge relay system in the active site. Residues 325–410 enclose the PDZ domain; the sequence is MGITMLTLTP…NLDIVILRGV (86 aa).

It belongs to the peptidase S1C family. Interacts with th/DIAP1 (via BIR 2 domain).

The protein localises to the mitochondrion intermembrane space. Its subcellular location is the mitochondrion membrane. The enzyme catalyses Cleavage of non-polar aliphatic amino-acids at the P1 position, with a preference for Val, Ile and Met. At the P2 and P3 positions, Arg is selected most strongly with a secondary preference for other hydrophilic residues.. In terms of biological role, serine protease that shows proteolytic activity against a non-specific substrate beta-casein. Promotes or induces cell death either by direct binding to and inhibition of BIRC proteins (also called inhibitor of apoptosis proteins, IAPs), leading to an increase in caspase activity, or by a BIRC inhibition-independent, caspase-independent and serine protease activity-dependent mechanism. Can antagonize antiapoptotic activity of th/Diap1 by directly inducing the degradation of th/Diap1. The protein is Serine protease HTRA2, mitochondrial of Drosophila yakuba (Fruit fly).